We begin with the raw amino-acid sequence, 1223 residues long: A disintegrin and metalloproteinase with thrombospondin motifs 14 (1223 aa).

Positions methionine 1–alanine 22 are cleaved as a signal peptide. Residues glycine 23–arginine 252 constitute a propeptide that is removed on maturation. N-linked (GlcNAc...) asparagine glycosylation is present at asparagine 109. The region spanning tyrosine 259–proline 460 is the Peptidase M12B domain. 3 cysteine pairs are disulfide-bonded: cysteine 336–cysteine 382, cysteine 376–cysteine 455, and cysteine 415–cysteine 441. Position 398 (histidine 398) interacts with Zn(2+). The active site involves glutamate 399. Positions 402 and 408 each coordinate Zn(2+). One can recognise a Disintegrin domain in the interval phenylalanine 461 to glutamine 551. Asparagine 475 carries an N-linked (GlcNAc...) asparagine glycan. 7 cysteine pairs are disulfide-bonded: cysteine 482/cysteine 507, cysteine 493/cysteine 516, cysteine 502/cysteine 535, cysteine 529/cysteine 540, cysteine 564/cysteine 601, cysteine 568/cysteine 606, and cysteine 579/cysteine 591. The TSP type-1 1 domain occupies aspartate 552–proline 607. The spacer stretch occupies residues leucine 730–methionine 846. TSP type-1 domains follow at residues aspartate 847–serine 907, glutamine 908–proline 967, and cysteine 968–glycine 1022. Asparagine 941 carries an N-linked (GlcNAc...) asparagine glycan. 3 disulfide bridges follow: cysteine 980/cysteine 1016, cysteine 984/cysteine 1021, and cysteine 995/cysteine 1005. Asparagine 1027 carries N-linked (GlcNAc...) asparagine glycosylation. The 39-residue stretch at serine 1059–alanine 1097 folds into the PLAC domain. Positions proline 1100–threonine 1223 are disordered. Positions asparagine 1101–glutamine 1125 are enriched in pro residues. Residues proline 1199–histidine 1211 show a composition bias toward basic and acidic residues.

Post-translationally, the precursor is cleaved by a furin endopeptidase. In terms of processing, glycosylated. Can be O-fucosylated by POFUT2 on a serine or a threonine residue found within the consensus sequence C1-X(2)-(S/T)-C2-G of the TSP type-1 repeat domains where C1 and C2 are the first and second cysteine residue of the repeat, respectively. Fucosylated repeats can then be further glycosylated by the addition of a beta-1,3-glucose residue by the glucosyltransferase, B3GALTL. Fucosylation mediates the efficient secretion of ADAMTS family members. Can also be C-glycosylated with one or two mannose molecules on tryptophan residues within the consensus sequence W-X-X-W of the TPRs, and N-glycosylated. These other glycosylations can also facilitate secretion. Expressed in retina and at low levels in brain, lung and placenta. High expression in fetal tissues.

Its subcellular location is the secreted. It is found in the extracellular space. The protein localises to the extracellular matrix. Has aminoprocollagen type I processing activity in the absence of ADAMTS2. Seems to be synthesized as a latent enzyme that requires activation to display aminoprocollagen peptidase activity. Cleaves lysyl oxidase LOX at a site downstream of its propeptide cleavage site to produce a short LOX form. The protein is A disintegrin and metalloproteinase with thrombospondin motifs 14 (ADAMTS14) of Homo sapiens (Human).